Reading from the N-terminus, the 156-residue chain is MIQYIKGDLFTHAIPAGKKVILAHACNTHGSWGGGIAAVFRKKFPKSNNEYSQYCHKNSNLLGTSFIIESDQPNILIACLFTSDFNQTPEQIVHFTKQSIADLARKVSDYKEVEKCDGKVAINMPKINAGIFGVPWEDTESALQEFDNLHFNVYVI.

In terms of domain architecture, Macro spans 1–156 (MIQYIKGDLF…DNLHFNVYVI (156 aa)). Residues 7-9 (GDL), 25-27 (ACN), 32-37 (WGGGIA), and 127-133 (INAGIFG) contribute to the substrate site.

Belongs to the POA1 family.

It catalyses the reaction ADP-alpha-D-ribose 1''-phosphate + H2O = ADP-D-ribose + phosphate. In terms of biological role, highly specific phosphatase involved in the metabolism of ADP-ribose 1''-phosphate (Appr1p) which is produced as a consequence of tRNA splicing. The protein is ADP-ribose 1''-phosphate phosphatase (POA1) of Candida albicans (strain SC5314 / ATCC MYA-2876) (Yeast).